Reading from the N-terminus, the 421-residue chain is NADH-quinone oxidoreductase subunit F (421 aa).

Residue 54 to 63 (GRGGAGFSTG) participates in NAD(+) binding. 166–213 (GAGAYICGEETALLESLEGKKGMPRLKPPFPAGFGLYGCPTTINNVES) is an FMN binding site. Residues cysteine 344, cysteine 347, cysteine 350, and cysteine 390 each contribute to the [4Fe-4S] cluster site.

Belongs to the complex I 51 kDa subunit family. FMN is required as a cofactor. It depends on [4Fe-4S] cluster as a cofactor.

It catalyses the reaction a quinone + NADH + 5 H(+)(in) = a quinol + NAD(+) + 4 H(+)(out). In terms of biological role, NDH-1 shuttles electrons from NADH, via FMN and iron-sulfur (Fe-S) centers, to quinones in the respiratory chain. Couples the redox reaction to proton translocation (for every two electrons transferred, four hydrogen ions are translocated across the cytoplasmic membrane), and thus conserves the redox energy in a proton gradient. The polypeptide is NADH-quinone oxidoreductase subunit F (nuoF) (Rickettsia rickettsii (strain Sheila Smith)).